A 233-amino-acid chain; its full sequence is 7-cyano-7-deazaguanine synthase (233 aa).

7–17 (LSGGLDSAVTS) is a binding site for ATP. 4 residues coordinate Zn(2+): Cys195, Cys206, Cys209, and Cys212.

This sequence belongs to the QueC family. Zn(2+) is required as a cofactor.

It catalyses the reaction 7-carboxy-7-deazaguanine + NH4(+) + ATP = 7-cyano-7-deazaguanine + ADP + phosphate + H2O + H(+). The protein operates within purine metabolism; 7-cyano-7-deazaguanine biosynthesis. In terms of biological role, catalyzes the ATP-dependent conversion of 7-carboxy-7-deazaguanine (CDG) to 7-cyano-7-deazaguanine (preQ(0)). The polypeptide is 7-cyano-7-deazaguanine synthase (Methanococcus maripaludis (strain C5 / ATCC BAA-1333)).